The chain runs to 107 residues: Death-associated protein-like 1 (107 aa).

The interval 1-26 (MANEVQVQLSPLKGGHPPAVKAGGKR) is disordered.

In terms of tissue distribution, detected in the corneal epithelium, and only in trace amounts in the liver, bladder, brain, heart, and stomach.

In terms of biological role, may play a role in the early stages of epithelial differentiation or in apoptosis. The polypeptide is Death-associated protein-like 1 (DAPL1) (Bos taurus (Bovine)).